The sequence spans 118 residues: Holo-[acyl-carrier-protein] synthase (118 aa).

Residues D8 and E58 each coordinate Mg(2+).

Belongs to the P-Pant transferase superfamily. AcpS family. Requires Mg(2+) as cofactor.

It is found in the cytoplasm. The enzyme catalyses apo-[ACP] + CoA = holo-[ACP] + adenosine 3',5'-bisphosphate + H(+). Its function is as follows. Transfers the 4'-phosphopantetheine moiety from coenzyme A to a Ser of acyl-carrier-protein. This Lactobacillus helveticus (strain DPC 4571) protein is Holo-[acyl-carrier-protein] synthase.